Reading from the N-terminus, the 131-residue chain is Translation initiation factor 5A (131 aa).

Lys36 carries the post-translational modification Hypusine.

It belongs to the eIF-5A family.

The protein localises to the cytoplasm. In terms of biological role, functions by promoting the formation of the first peptide bond. This is Translation initiation factor 5A (eIF5A) from Metallosphaera sedula (strain ATCC 51363 / DSM 5348 / JCM 9185 / NBRC 15509 / TH2).